A 280-amino-acid chain; its full sequence is HCLS1-associated protein X-1 (280 aa).

Ser2 is modified (N-acetylserine). Residues Ser2–Arg45 form a required for localization in mitochondria region. 2 disordered regions span residues Gly12–Pro70 and Thr100–Asp263. Residues Asp30–Glu43 are compositionally biased toward acidic residues. An involved in HCLS1 binding region spans residues Thr115–Arg280. 2 stretches are compositionally biased toward basic and acidic residues: residues Pro116–Thr125 and Pro134–Ser154. The involved in CASP9 binding stretch occupies residues Val176–Ser207. The interval Ser177 to Asp248 is involved in GNA13 binding. The required for localization in sarcoplasmic reticulum stretch occupies residues Glu184 to Arg280. An involved in PKD2 binding region spans residues Asp185 to Arg280. A phosphoserine mark is found at Ser190 and Ser193. The tract at residues Gln204–Glu226 is involved in PLN binding. The involved in ATP2A2 binding stretch occupies residues Gln204–Ala246. Positions Ser211–Arg280 are mediates interaction with UCP3. Over residues Thr218–Ser256 the composition is skewed to basic and acidic residues. Residues Leu271 to Arg280 are required for ITGB6 binding.

The protein belongs to the HAX1 family. Interacts with ABCB1, ABCB4 and ABCB11. Directly associates with HCLS1/HS1, through binding to its N-terminal region. Interacts with CTTN. Interacts with PKD2. Interacts with GNA13. Interacts with CASP9. Interacts with ITGB6. Interacts with PLN and ATP2A2; these interactions are inhibited by calcium. Interacts with GRB7. Interacts (via C-terminus) with XIAP/BIRC4 (via BIR 2 domain and BIR 3 domain) and this interaction blocks ubiquitination of XIAP/BIRC4. Interacts with TPC2. Interacts with KCNC3. Interacts with XPO1. Interacts with RNF217. Interacts with UCP3; the interaction is direct and calcium-dependent. Interacts with MAPRE2; this interaction regulates cell migration in keratinocytes. As to expression, ubiquitous, with highest levels in kidney and liver (at protein level).

It is found in the mitochondrion matrix. It localises to the endoplasmic reticulum. The protein localises to the nucleus membrane. Its subcellular location is the cytoplasmic vesicle. The protein resides in the cytoplasm. It is found in the cell cortex. It localises to the cell membrane. The protein localises to the sarcoplasmic reticulum. Its subcellular location is the P-body. The protein resides in the nucleus. Its function is as follows. Recruits the Arp2/3 complex to the cell cortex and regulates reorganization of the cortical actin cytoskeleton via its interaction with KCNC3 and the Arp2/3 complex. Slows down the rate of inactivation of KCNC3 channels. Promotes GNA13-mediated cell migration. Involved in the clathrin-mediated endocytosis pathway. May be involved in internalization of ABC transporters such as ABCB11. May inhibit CASP9 and CASP3. Promotes cell survival. May regulate intracellular calcium pools. This is HCLS1-associated protein X-1 (Hax1) from Mus musculus (Mouse).